A 295-amino-acid chain; its full sequence is Protease HtpX homolog (295 aa).

Helical transmembrane passes span 6-26 (IGLF…VTSV) and 40-60 (LSSL…VSLL). His148 is a binding site for Zn(2+). Glu149 is a catalytic residue. Position 152 (His152) interacts with Zn(2+). Transmembrane regions (helical) follow at residues 163–183 (LIQG…SYAL) and 198–218 (IANI…VAYF). Glu223 serves as a coordination point for Zn(2+).

This sequence belongs to the peptidase M48B family. Zn(2+) is required as a cofactor.

The protein localises to the cell inner membrane. This chain is Protease HtpX homolog, found in Leptospira interrogans serogroup Icterohaemorrhagiae serovar copenhageni (strain Fiocruz L1-130).